A 576-amino-acid chain; its full sequence is Sodium/proton antiporter 1 (576 aa).

A chloroplast-targeting transit peptide spans 1 to 60 (MAVFPIGSHFAPPHQLTKRHVIATSSPISISTRLPQNVSFSKVSGVTGSTRLSKHGVLVR). The next 9 helical transmembrane spans lie at 237-257 (TLLW…DNLT), 279-299 (LGGV…IGDV), 320-340 (FLPS…TSEV), 357-377 (APRG…VPVF), 379-399 (ALTG…LWIL), 426-446 (GALF…AGIL), 462-482 (LIAS…LVAA), 501-521 (LIAF…AAGV), and 541-561 (FAFA…NLHF).

This sequence belongs to the NhaD Na(+)/H(+) (TC 2.A.62) antiporter family. Mostly expressed in mature and senescent leaves, and, to a lower extent, in seeds, roots, shoots, flowers and developing siliques.

The protein localises to the plastid. It is found in the chloroplast membrane. The protein resides in the chloroplast envelope. In terms of biological role, na(+)/H(+) antiporter that extrudes sodium in exchange for external protons. This is Sodium/proton antiporter 1 from Arabidopsis thaliana (Mouse-ear cress).